Consider the following 398-residue polypeptide: MATTLATDVRLSIAHQTRFALRLASTISSNPKSAASNAAFSPVSLYSALSLLAAGAGSATRDQLVATLGTGKVEGLHALAEQVVQFVLADASSTGGSACRFANGVFVDASLLLKPSFQEIAVCKYKAETQSVDFQTKAAEVTTQVNSWVEKVTSGRIKDILPPGSIDNTTKLVLANALYFKGAWTEQFDSYGTKNDYFYLLDGSSVQTPFMSSMDDQYLLSSDGLKVLKLPYKQGGDNRQFFMYILLPEAPGGLSSLAEKLSAEPDFLERHIPRQRVALRQFKLPKFKISFGIEASDLLKCLGLQLPFGDEADFSEMVDSLMPQGLRVSSVFHQAFVEVNEQGTEAAASTAIKMVLQQARPPSVMDFIADHPFLFLVREDISGVVLFMGHVVNPLLSS.

An RCL region spans residues 343-367 (GTEAAASTAIKMVLQQARPPSVMDF).

The protein belongs to the serpin family.

Inhibits chymotrypsin and cathepsin G in vitro. The polypeptide is Serpin-Z1A (WZCI) (Triticum aestivum (Wheat)).